The primary structure comprises 689 residues: MTTNTFTDPPVEMAKERGKTQFTVRDVTNFLNGGEEETQIVEKIMSSIERDPVLSVTADYDCNLQQARKQTMERVAALSPYLVTDTEKLSLWRAQLHGMVDMSTRTRLSIHNNLFIGSIRGSGTPEQFKYWVKKGAVAVKQFYGCFAMTELGHGSNLKGLETTATYDQDSDQFIINTPHIGATKWWIGGAAHTSTHCVCFAKLIVHGKDYGTRNFVVPLRNVHDHSLKVGVSIGDIGKKMGRDGVDNGWIQFTNVRIPRQNMLMRYAKVSDTGVVTKPALDQLTYGALIRGRVSMIADSFHVSKRFLTIALRYACVRRQFGTSGDTKETKIIDYPYHQRRLLPLLAYCYAMKMGADEAQKTWIETTDRILALNPNDPAQKNDLEKAVTDTKELFAASAGMKAFTTWGCAKIIDECRQACGGHGYSGYNGFGQGYADWVVQCTWEGDNNVLCLSMGRGLVQSALQILAGKHVGASIQYVGDKSKISQNGQGTPREQLLSPEFLVEAFRTASRNNILRTTDKYQELVKTLNPDQAFEELSQQRFQCARIHTRQHLISSFYARIATAKDDIKPHLLKLANLFALWSIEEDTGIFLRENILTPGDIDLINSLVDELCVAVRDQVIGLTDAFGLSDFFINAPIGSYDGNVYEKYFAKVNQQNPATNPRPPYYESTLKPFLFREEEDDEICDLDE.

FAD is bound by residues Thr-149 and Gly-188. Glu-444 serves as the catalytic Proton acceptor.

The protein belongs to the acyl-CoA oxidase family. As to quaternary structure, heteropentamer composed of five different subunits. FAD is required as a cofactor.

It is found in the peroxisome. The enzyme catalyses a 2,3-saturated acyl-CoA + O2 = a (2E)-enoyl-CoA + H2O2. Its pathway is lipid metabolism; peroxisomal fatty acid beta-oxidation. The sequence is that of Acyl-coenzyme A oxidase 1 (POX1) from Yarrowia lipolytica (strain CLIB 122 / E 150) (Yeast).